The chain runs to 503 residues: Aspartyl/glutamyl-tRNA(Asn/Gln) amidotransferase subunit B (503 aa).

Belongs to the GatB/GatE family. GatB subfamily. Heterotrimer of A, B and C subunits.

The enzyme catalyses L-glutamyl-tRNA(Gln) + L-glutamine + ATP + H2O = L-glutaminyl-tRNA(Gln) + L-glutamate + ADP + phosphate + H(+). The catalysed reaction is L-aspartyl-tRNA(Asn) + L-glutamine + ATP + H2O = L-asparaginyl-tRNA(Asn) + L-glutamate + ADP + phosphate + 2 H(+). Allows the formation of correctly charged Asn-tRNA(Asn) or Gln-tRNA(Gln) through the transamidation of misacylated Asp-tRNA(Asn) or Glu-tRNA(Gln) in organisms which lack either or both of asparaginyl-tRNA or glutaminyl-tRNA synthetases. The reaction takes place in the presence of glutamine and ATP through an activated phospho-Asp-tRNA(Asn) or phospho-Glu-tRNA(Gln). This is Aspartyl/glutamyl-tRNA(Asn/Gln) amidotransferase subunit B from Cereibacter sphaeroides (strain KD131 / KCTC 12085) (Rhodobacter sphaeroides).